A 518-amino-acid chain; its full sequence is Flagellin (518 aa).

It belongs to the bacterial flagellin family.

Its subcellular location is the secreted. The protein localises to the bacterial flagellum. In terms of biological role, flagellin is the subunit protein which polymerizes to form the filaments of bacterial flagella. This Aquifex aeolicus (strain VF5) protein is Flagellin (flaA).